Consider the following 329-residue polypeptide: Prostaglandin reductase 1 (329 aa).

A Phosphothreonine modification is found at Thr-18. Ser-20 bears the Phosphoserine mark. NADP(+) is bound by residues 152–155 (GAVG), Lys-178, Tyr-193, Asn-217, 239–245 (CGAISVY), 270–272 (FVV), and Asn-321. Lys-178 carries the post-translational modification N6-(2-hydroxyisobutyryl)lysine; alternate. Lys-178 carries the post-translational modification N6-acetyllysine; alternate.

Belongs to the NADP-dependent oxidoreductase L4BD family. As to quaternary structure, monomer or homodimer.

Its subcellular location is the cytoplasm. It carries out the reaction 13,14-dihydro-15-oxo-prostaglandin E1 + NADP(+) = 15-oxoprostaglandin E1 + NADPH + H(+). The enzyme catalyses 13,14-dihydro-15-oxo-prostaglandin E2 + NADP(+) = 15-oxoprostaglandin E2 + NADPH + H(+). The catalysed reaction is 13,14-dihydro-15-oxo-prostaglandin F1alpha + NADP(+) = 15-oxoprostaglandin F1alpha + NADPH + H(+). It catalyses the reaction 13,14-dihydro-15-oxo-PGF2alpha + NADP(+) = 15-oxoprostaglandin F2alpha + NADPH + H(+). It carries out the reaction leukotriene B4 + NADP(+) = 12-oxo-leukotriene B4 + NADPH + H(+). The enzyme catalyses 20-hydroxy-leukotriene B4 + NADP(+) = 12-oxo-20-hydroxy-leukotriene B4 + NADPH + H(+). The catalysed reaction is 6-trans-leukotriene B4 + NADP(+) = 12-oxo-(5S)-hydroxy-(6E,8E,10E,14Z)-eicosatetraenoate + NADPH + H(+). It catalyses the reaction (5S,12S)-dihydroxy-(6E,10E,12E,14Z)-eicosatetraenoate + NADP(+) = 12-oxo-(5S)-hydroxy-(6E,8E,10E,14Z)-eicosatetraenoate + NADPH + H(+). It carries out the reaction an n-alkanal + NADP(+) = an alk-2-enal + NADPH + H(+). The enzyme catalyses hexanal + NADP(+) = (E)-hex-2-enal + NADPH + H(+). The catalysed reaction is octanal + NADP(+) = (2E)-octenal + NADPH + H(+). It catalyses the reaction decanal + NADP(+) = (2E)-decenal + NADPH + H(+). It carries out the reaction dodecanal + NADP(+) = (2E)-dodecenal + NADPH + H(+). The enzyme catalyses 4-hydroxynonanal + NADP(+) = (E)-4-hydroxynon-2-enal + NADPH + H(+). The catalysed reaction is pentan-2-one + NADP(+) = (E)-pent-3-en-2-one + NADPH + H(+). It catalyses the reaction nonan-2-one + NADP(+) = (3E)-nonen-2-one + NADPH + H(+). NAD(P)H-dependent oxidoreductase involved in metabolic inactivation of pro- and anti-inflammatory eicosanoids: prostaglandins (PG), leukotrienes (LT) and lipoxins (LX). Catalyzes with high efficiency the reduction of the 13,14 double bond of 15-oxoPGs, including 15-oxo-PGE1, 15-oxo-PGE2, 15-oxo-PGF1-alpha and 15-oxo-PGF2-alpha. Catalyzes with lower efficiency the oxidation of the hydroxyl group at C12 of LTB4 and its derivatives, converting them into biologically less active 12-oxo-LTB4 metabolites. Reduces 15-oxo-LXA4 to 13,14 dihydro-15-oxo-LXA4, enhancing neutrophil recruitment at the inflammatory site. Plays a role in metabolic detoxification of alkenals and ketones. Reduces alpha,beta-unsaturated alkenals and ketones, particularly those with medium-chain length, showing highest affinity toward (2E)-decenal and (3E)-3-nonen-2-one. May inactivate 4-hydroxy-2-nonenal, a cytotoxic lipid constituent of oxidized low-density lipoprotein particles. The protein is Prostaglandin reductase 1 (PTGR1) of Bos taurus (Bovine).